The sequence spans 350 residues: TATA box-binding protein-like 2 (350 aa).

Residues 82–150 are disordered; the sequence is ENRDQTVTGN…QPSPETPNSN (69 aa). Positions 94–116 are enriched in basic and acidic residues; it reads ASEESCRTRDRQSQLQLPDEHGS. Composition is skewed to polar residues over residues 118–128 and 139–150; these read LNLNSNSSPDP and SNQPSPETPNSN.

This sequence belongs to the TBP family. In terms of assembly, interacts with TAF3. Expressed in myotubes and myofibers (at protein level). Expressed in a wide variety of tissues with highest levels in heart, lung, liver, uterus and placenta and especially the gonads. Expression is higher in the ovary than the testis, and within the ovary expression is localized to the oocytes.

The protein localises to the cytoplasm. It localises to the nucleus. Transcription factor required in complex with TAF3 for the differentiation of myoblasts into myocytes. The complex replaces TFIID at specific promoters at an early stage in the differentiation process. The chain is TATA box-binding protein-like 2 from Mus musculus (Mouse).